The following is an 85-amino-acid chain: Large ribosomal subunit protein bL27 (85 aa).

Residues 1-20 (MATKKAGGSTRNGRDSEAKR) are disordered.

This sequence belongs to the bacterial ribosomal protein bL27 family.

The sequence is that of Large ribosomal subunit protein bL27 from Actinobacillus succinogenes (strain ATCC 55618 / DSM 22257 / CCUG 43843 / 130Z).